The primary structure comprises 643 residues: MPLLFLERFPWPSLRTYTGLSGLALLGTIISAYRALSQPEAGPGEPDQLTASLQPEPPAPARPSAGGPRARDVAQYLLSDSLFVWVLVNTACCVLMLVAKLIQCIVFGPLRVSERQHLKDKFWNFIFYKFIFIFGVLNVQTVEEVVMWCLWFAGLVFLHLMVQLCKDRFEYLSFSPTTPMSSHGRVLSLLVAMLLSCCGLAAVCSITGYTHGMHTLAFMAAESLLVTVRTAHVILRYVIHLWDLNHEGTWEGKGTYVYYTDFVMELTLLSLDLMHHIHMLLFGNIWLSMASLVIFMQLRYLFHEVQRRIRRHKNYLRVVGNMEARFAVATPEELAVNNDDCAICWDSMQAARKLPCGHLFHNSCLRSWLEQDTSCPTCRMSLNIADNNRVREEHQGENLDENLVPVAAAEGRPRLNQHNHFFHFDGSRIASWLPSFSVEVMHTTNILGITQASNSQLNAMAHQIQEMFPQVPYHLVLQDLQLTRSVEITTDNILEGRIQVPFPTQRSDSIRPALNSPVERPSSDQEEGETSAQTERVPLDLSPRLEETLDFGEVEVEPSEVEDFEARGSRFSKSADERQRMLVQRKDELLQQARKRFLNKSSEDDAASESFLPSEGASSDPVTLRRRMLAAAAERRLQKQQTS.

Residues 39-67 (PEAGPGEPDQLTASLQPEPPAPARPSAGG) are disordered. 6 helical membrane passes run 82–102 (LFVWVLVNTACCVLMLVAKLI), 122–142 (FWNFIFYKFIFIFGVLNVQTV), 145–165 (VVMWCLWFAGLVFLHLMVQLC), 186–206 (VLSLLVAMLLSCCGLAAVCSI), 215–235 (TLAFMAAESLLVTVRTAHVIL), and 276–296 (HIHMLLFGNIWLSMASLVIFM). Residues 341–379 (CAICWDSMQAARKLPCGHLFHNSCLRSWLEQDTSCPTCR) form an RING-type zinc finger. Residues 429–449 (IASWLPSFSVEVMHTTNILGI) form a helical membrane-spanning segment. Residues 456-498 (QLNAMAHQIQEMFPQVPYHLVLQDLQLTRSVEITTDNILEGRI) enclose the CUE domain. Disordered regions lie at residues 504–579 (TQRS…DERQ) and 596–624 (RFLNKSSEDDAASESFLPSEGASSDPVTL). A phosphoserine mark is found at serine 516, serine 523, and serine 542. Over residues 548–563 (TLDFGEVEVEPSEVED) the composition is skewed to acidic residues. Positions 564-579 (FEARGSRFSKSADERQ) are enriched in basic and acidic residues. The VCP/p97-interacting motif (VIM) stretch occupies residues 622–640 (VTLRRRMLAAAAERRLQKQ).

Interacts with RNF5. Also forms an ERAD complex containing VCP/p97, NGLY1; PSMC1; SAKS1 and RAD23B required for coupling retrotranslocation, ubiquitination and deglycosylation. Interacts with DERL1. Interacts (through a region distinct from the RING finger) with UBE2G2/UBC7. Component of the VCP/p97-AMFR/gp78 complex that enhances VCP/p97 binding to polyubiquitinated proteins for their degradation by the endoplasmic reticulum-associated degradation (ERAD) pathway. Interacts (via the VIM) with VCP/p97. Interacts (via its membrane domain) with INSIG1; the interaction initiates the sterol-mediated ubiquitination and degradation of HMGCR by the ERAD pathway. Interacts with AUP1, UBE2G2 and RNF139/TRC8; interaction with AUP1 facilitates interaction of AMFR with ubiquitin-conjugating enzyme UBE2G2 and ubiquitin ligase RNF139, leading to sterol-induced ubiquitination of HMGCR and its subsequent proteasomal degradation. Interacts with BAG6. Interacts with USP13 (via UBA 2 domain); the interaction is direct. Interacts with LMBR1L. Interacts with UBAC2 and CTNNB1. Interacts with C18orf32. As to quaternary structure, (Microbial infection) Interacts with Staphylococcus aureus HIgB; this interaction regulates AMFR-mediated inflammation by promoting TAB3 ubiquitination to promote TAB3-TAK1 complex formation. Palmitoylation of the RING-type zing finger by ZDHHC6 promotes localization to the peripheral endoplasmic reticulum. Widely expressed.

The protein resides in the endoplasmic reticulum membrane. It catalyses the reaction [E2 ubiquitin-conjugating enzyme]-S-ubiquitinyl-L-cysteine + [acceptor protein]-L-cysteine = [E2 ubiquitin-conjugating enzyme]-L-cysteine + [acceptor protein]-S-ubiquitinyl-L-cysteine.. It participates in protein modification; protein ubiquitination. Functionally, E3 ubiquitin-protein ligase that mediates the polyubiquitination of lysine and cysteine residues on target proteins, such as CD3D, CYP3A4, CFTR, INSIG1, SOAT2/ACAT2 and APOB for proteasomal degradation. Component of a VCP/p97-AMFR/gp78 complex that participates in the final step of endoplasmic reticulum-associated degradation (ERAD). The VCP/p97-AMFR/gp78 complex is involved in the sterol-accelerated ERAD degradation of HMGCR through binding to the HMGCR-INSIG1 complex at the ER membrane. In addition, interaction of AMFR with AUP1 facilitates interaction of AMFR with ubiquitin-conjugating enzyme UBE2G2 and ubiquitin ligase RNF139, leading to sterol-induced HMGCR ubiquitination. The ubiquitinated HMGCR is then released from the ER into the cytosol for subsequent destruction. In addition to ubiquitination on lysine residues, catalyzes ubiquitination on cysteine residues: together with INSIG1, mediates polyubiquitination of SOAT2/ACAT2 at 'Cys-277', leading to its degradation when the lipid levels are low. Catalyzes ubiquitination and subsequent degradation of INSIG1 when cells are depleted of sterols. Mediates polyubiquitination of INSIG2 at 'Cys-215' in some tissues, leading to its degradation. Also regulates ERAD through the ubiquitination of UBL4A a component of the BAG6/BAT3 complex. Also acts as a scaffold protein to assemble a complex that couples ubiquitination, retranslocation and deglycosylation. Mediates tumor invasion and metastasis as a receptor for the GPI/autocrine motility factor. In association with LMBR1L and UBAC2, negatively regulates the canonical Wnt signaling pathway in the lymphocytes by promoting the ubiquitin-mediated degradation of CTNNB1 and Wnt receptors FZD6 and LRP6. Regulates NF-kappa-B and MAPK signaling pathways by mediating 'Lys-27'-linked polyubiquitination of TAB3 and promoting subsequent TAK1/MAP3K7 activation. Required for proper lipid homeostasis. The polypeptide is E3 ubiquitin-protein ligase AMFR (Homo sapiens (Human)).